A 338-amino-acid chain; its full sequence is NADPH dehydrogenase (338 aa).

22–25 (SPMC) contributes to the FMN binding site. Tyr27 provides a ligand contact to substrate. Residues Ala59 and Gln101 each contribute to the FMN site. Residue 163–166 (HAAH) coordinates substrate. Residues Arg214 and 306-307 (GR) each bind FMN.

It belongs to the NADH:flavin oxidoreductase/NADH oxidase family. NamA subfamily. In terms of assembly, homotetramer. It depends on FMN as a cofactor.

The catalysed reaction is A + NADPH + H(+) = AH2 + NADP(+). In terms of biological role, catalyzes the reduction of the double bond of an array of alpha,beta-unsaturated aldehydes and ketones. It also reduces the nitro group of nitroester and nitroaromatic compounds. It could have a role in detoxification processes. In Listeria welshimeri serovar 6b (strain ATCC 35897 / DSM 20650 / CCUG 15529 / CIP 8149 / NCTC 11857 / SLCC 5334 / V8), this protein is NADPH dehydrogenase.